Reading from the N-terminus, the 131-residue chain is Large ribosomal subunit protein bL12 (131 aa).

Belongs to the bacterial ribosomal protein bL12 family. In terms of assembly, homodimer. Part of the ribosomal stalk of the 50S ribosomal subunit. Forms a multimeric L10(L12)X complex, where L10 forms an elongated spine to which 2 to 4 L12 dimers bind in a sequential fashion. Binds GTP-bound translation factors.

In terms of biological role, forms part of the ribosomal stalk which helps the ribosome interact with GTP-bound translation factors. Is thus essential for accurate translation. The polypeptide is Large ribosomal subunit protein bL12 (Nocardioides sp. (strain ATCC BAA-499 / JS614)).